A 676-amino-acid chain; its full sequence is UvrABC system protein C (676 aa).

The region spanning 16-95 is the GIY-YIG domain; that stretch reads VEPGVYRFRD…IKEFDPRFNI (80 aa). Residues 208 to 243 form the UVR domain; that stretch reads DRLVRDLERKMTAAAEDLDFERAARLRDDIGALRRA.

It belongs to the UvrC family. Interacts with UvrB in an incision complex.

It is found in the cytoplasm. The UvrABC repair system catalyzes the recognition and processing of DNA lesions. UvrC both incises the 5' and 3' sides of the lesion. The N-terminal half is responsible for the 3' incision and the C-terminal half is responsible for the 5' incision. In Mycobacterium sp. (strain JLS), this protein is UvrABC system protein C.